We begin with the raw amino-acid sequence, 340 residues long: Probable HTH-type transcriptional regulator EndR (340 aa).

Residues 1 to 58 (MVTTMKEVAERAGVSKSTVSQFLQKRYNYMSENTKKKIEQAIEDLSYIPNEVARSLKQ) form the HTH lacI-type domain. The H-T-H motif DNA-binding region spans 5–24 (MKEVAERAGVSKSTVSQFLQ).

Its function is as follows. Putative repressor of the endoglucanase operon. The protein is Probable HTH-type transcriptional regulator EndR (endR) of Paenibacillus polymyxa (Bacillus polymyxa).